The sequence spans 206 residues: Large ribosomal subunit protein uL4 (206 aa).

Residues 63 to 85 (MYKQKGTGSARHGSARAPQFRGG) form a disordered region.

Belongs to the universal ribosomal protein uL4 family. As to quaternary structure, part of the 50S ribosomal subunit.

Functionally, one of the primary rRNA binding proteins, this protein initially binds near the 5'-end of the 23S rRNA. It is important during the early stages of 50S assembly. It makes multiple contacts with different domains of the 23S rRNA in the assembled 50S subunit and ribosome. Forms part of the polypeptide exit tunnel. The polypeptide is Large ribosomal subunit protein uL4 (Beijerinckia indica subsp. indica (strain ATCC 9039 / DSM 1715 / NCIMB 8712)).